Reading from the N-terminus, the 204-residue chain is Gellan lyase (204 aa).

As to quaternary structure, multimer.

The protein resides in the secreted. It catalyses the reaction Eliminative cleavage of beta-D-glucopyranosyl-(1-&gt;4)-beta-D-glucopyranosyluronate bonds of gellan backbone releasing tetrasaccharides containing a 4-deoxy-4,5-unsaturated D-glucopyranosyluronic acid at the non-reducing end. The tetrasaccharide produced from deacetylated gellan is beta-D-4-deoxy-Delta(4)-GlcAp-(1-&gt;4)-beta-D-Glcp-(1-&gt;4)-alpha-L-Rhap-(1-&gt;3)-beta-D-Glcp.. Its activity is regulated as follows. Activity is stimulated by zinc, potassium, lithium, cobalt, sodium, calcium, iron, manganase, magnesium and mercury ions at a concentration of 1 mM, but inhibited by copper ions at a concentration of 1 mM. Activity is inhibited by potassium, sodium and magnesium ions at a concentration of 1 M. Activity is inhibited by urea, EDTA, dithiothreitol, p-CMB, PSF, natrium lauryl sulfate and N-bromosuccinimide. In terms of biological role, cleaves the glycosidic bonds of gellan backbone and releases tetrasaccharide units of glucuronyl-glucosyl-rhamnosyl-glucose with unsaturated glucuronic acid at the non-reducing terminal. The enzyme is highly specific to the heteropolysaccharide gellan. The protein is Gellan lyase of Geobacillus stearothermophilus (Bacillus stearothermophilus).